A 533-amino-acid chain; its full sequence is Large neutral amino acids transporter small subunit 2 (533 aa).

The tract at residues 1–33 (MEKGTRQRNNTAKNHPDRGSDTSPEAEASSGGG) is disordered. The Cytoplasmic segment spans residues 1 to 45 (MEKGTRQRNNTAKNHPDRGSDTSPEAEASSGGGGVALKKEIGLVS). 4 positions are modified to phosphoserine: S20, S23, S29, and S30. A helical membrane pass occupies residues 46–66 (ACGIIVGNIIGSGIFVSPKGV). I54 provides a ligand contact to L-leucine. Over 67–74 (LENAGSVG) the chain is Extracellular. The chain crosses the membrane as a helical span at residues 75 to 96 (LALIVWIVTGVITAVGALCYAE). Topologically, residues 97–117 (LGVTIPKSGGDYSYVKDIFGG) are cytoplasmic. The chain crosses the membrane as a helical span at residues 118–150 (LAGFLRLWIAVLVIYPTNQAVIALTFSNYVLQP). L-tryptophan is bound at residue N135. The Extracellular segment spans residues 151 to 158 (LFPTCFPP). The chain crosses the membrane as a helical span at residues 159–179 (ESGLRLLAAICLLLLTWVNCS). The Cytoplasmic portion of the chain corresponds to 180 to 182 (SVR). Residues 183 to 211 (WATRVQDIFTAGKLLALALIIIMGVVQIC) traverse the membrane as a helical segment. Residues 212-231 (KGEFFWLEPKNAFENFQEPD) lie on the Extracellular side of the membrane. Residues 232–253 (IGLVALAFLQGSFAYGGWNFLN) traverse the membrane as a helical segment. G247 contributes to the L-leucine binding site. Over 254 to 266 (YVTEELVDPYKNL) the chain is Cytoplasmic. The chain crosses the membrane as a helical span at residues 267–288 (PRAIFISIPLVTFVYVFANIAY). Residues 289-313 (VTAMSPQELLASNAVAVTFGEKLLG) lie on the Extracellular side of the membrane. A helical membrane pass occupies residues 314–339 (VMAWIMPISVALSTFGGVNGSLFTSS). Over 340-365 (RLFFAGAREGHLPSVLAMIHVKRCTP) the chain is Cytoplasmic. The chain crosses the membrane as a helical span at residues 366–383 (IPALLFTCLSTLLMLVTS). The Extracellular segment spans residues 384-387 (DMYT). A helical transmembrane segment spans residues 388-409 (LINYVGFINYLFYGVTVAGQIV). N396 contributes to the L-tryptophan binding site. At 410–424 (LRWKKPDIPRPIKIS) the chain is on the cytoplasmic side. The next 2 helical transmembrane spans lie at 425-447 (LLFP…WSEP) and 448-467 (VVCG…YFLG). At 468 to 533 (VYWQHKPKCF…VKDPDSEEQP (66 aa)) the chain is on the cytoplasmic side. Positions 500–533 (GDSGTEETIDDVEEQHKPIFQPTPVKDPDSEEQP) are disordered. Over residues 502–512 (SGTEETIDDVE) the composition is skewed to acidic residues. The residue at position 529 (S529) is a Phosphoserine.

Belongs to the amino acid-polyamine-organocation (APC) superfamily. L-type amino acid transporter (LAT) (TC 2.A.3.8) family. As to quaternary structure, disulfide-linked heterodimer composed of the catalytic light chain subunit SLC7A8 and the heavy chain subunit SLC3A2. SLC3A2 acts as a chaperone for correct plasma membrane trafficking and stabilization of SLC7A8 and modulates the substrate affinity and specificity of SLC7A8. ICAM-1 associates with the heterodimer SLC3A2/SLC7A8; facilitates leucine uptake. Expression is seen in jejunum mucosa and the epithelial cells of the jejunum, ileum and colon, as well as in kidney, placenta, brain, testis and skeletal muscle. Expressed in retina, inner blood-retinal barrier of retina, retinal vascular endothelial cells. Also expressed in the intestinal epithelial cell line IEC-6 and in the retinal capillary endothelial cell line TR-iBRB2.

It localises to the cell membrane. The protein resides in the basolateral cell membrane. The catalysed reaction is L-dopa(out) + L-phenylalanine(in) = L-dopa(in) + L-phenylalanine(out). It carries out the reaction 3,3'-diiodo-L-thyronine(out) = 3,3'-diiodo-L-thyronine(in). It catalyses the reaction L-histidine(in) + L-phenylalanine(out) = L-histidine(out) + L-phenylalanine(in). The enzyme catalyses L-tryptophan(in) + L-phenylalanine(out) = L-tryptophan(out) + L-phenylalanine(in). The catalysed reaction is L-isoleucine(in) + L-phenylalanine(out) = L-isoleucine(out) + L-phenylalanine(in). It carries out the reaction L-valine(in) + L-phenylalanine(out) = L-valine(out) + L-phenylalanine(in). It catalyses the reaction L-leucine(in) + L-phenylalanine(out) = L-leucine(out) + L-phenylalanine(in). The enzyme catalyses L-glutamine(in) + L-phenylalanine(out) = L-glutamine(out) + L-phenylalanine(in). The catalysed reaction is L-cysteine(in) + L-phenylalanine(out) = L-cysteine(out) + L-phenylalanine(in). It carries out the reaction L-phenylalanine(out) + L-methionine(in) = L-phenylalanine(in) + L-methionine(out). It catalyses the reaction L-leucine(out) + L-methionine(in) = L-leucine(in) + L-methionine(out). The enzyme catalyses L-cysteine(out) + L-methionine(in) = L-cysteine(in) + L-methionine(out). The catalysed reaction is S-methylmercury-L-cysteine(out) + L-methionine(in) = S-methylmercury-L-cysteine(in) + L-methionine(out). It carries out the reaction S-methylmercury-L-cysteine(in) + L-leucine(out) = S-methylmercury-L-cysteine(out) + L-leucine(in). It catalyses the reaction S-methylmercury-L-cysteine(in) + L-phenylalanine(out) = S-methylmercury-L-cysteine(out) + L-phenylalanine(in). The enzyme catalyses L-phenylalanine(out) + L-serine(in) = L-phenylalanine(in) + L-serine(out). The catalysed reaction is L-phenylalanine(out) + glycine(in) = L-phenylalanine(in) + glycine(out). It carries out the reaction L-phenylalanine(out) + L-alanine(in) = L-phenylalanine(in) + L-alanine(out). It catalyses the reaction 3,3',5-triiodo-L-thyronine(out) = 3,3',5-triiodo-L-thyronine(in). Its activity is regulated as follows. Leucine transport activity is inhibited by 2-amino-bicyclo-(2,2,1)-heptane-2-carboxylate (BCH), glycine, L-isomers of the neutral amino acids and histidine. Its function is as follows. Associates with SLC3A2 to form a functional heterodimeric complex that translocates small and large neutral amino acids with broad specificity and a stoichiometry of 1:1. Functions as amino acid antiporter mediating the influx of extracellular essential amino acids mainly in exchange with the efflux of highly concentrated intracellular amino acids. Has relatively symmetrical selectivities but strongly asymmetrical substrate affinities at both the intracellular and extracellular sides of the transporter. This asymmetry allows SLC7A8 to regulate intracellular amino acid pools (mM concentrations) by exchange with external amino acids (uM concentration range), equilibrating the relative concentrations of different amino acids across the plasma membrane instead of mediating their net uptake. May play an essential role in the reabsorption of neutral amino acids from the epithelial cells to the bloodstream in the kidney. Involved in the uptake of methylmercury (MeHg) when administered as the L-cysteine or D,L-homocysteine complexes, and hence plays a role in metal ion homeostasis and toxicity. Involved in the cellular activity of small molecular weight nitrosothiols, via the stereoselective transport of L-nitrosocysteine (L-CNSO) across the transmembrane. Imports the thyroid hormone diiodothyronine (T2) and to a smaller extent triiodothyronine (T3) but not rT 3 or thyroxine (T4). Mediates the uptake of L-DOPA. May participate in auditory function. The sequence is that of Large neutral amino acids transporter small subunit 2 (Slc7a8) from Rattus norvegicus (Rat).